Reading from the N-terminus, the 1218-residue chain is Coatomer subunit alpha-3 (1218 aa).

9 WD repeats span residues 7–48, 49–88, 91–132, 133–172, 202–241, 246–285, 288–326, 363–404, and 450–489; these read TKSN…DRFD, EHDG…CLFT, GHLD…AVLT, GHNH…KKTV, GHDR…AWEV, GHMN…GIQT, REHD…PAFS, SLNQ…AGRT, and PLPI…GELQ. A disordered region spans residues 854–893; the sequence is AMANGGDGFDAEEGEANEEDGEEGGWDLEDLELPPEAETP. Over residues 862 to 888 the composition is skewed to acidic residues; that stretch reads FDAEEGEANEEDGEEGGWDLEDLELPP.

Oligomeric complex that consists of at least the alpha, beta, beta', gamma, delta, epsilon and zeta subunits.

It is found in the cytoplasm. The protein resides in the golgi apparatus membrane. Its subcellular location is the cytoplasmic vesicle. It localises to the COPI-coated vesicle membrane. In terms of biological role, the coatomer is a cytosolic protein complex that binds to dilysine motifs and reversibly associates with Golgi non-clathrin-coated vesicles, which further mediate biosynthetic protein transport from the ER, via the Golgi up to the trans Golgi network. Coatomer complex is required for budding from Golgi membranes, and is essential for the retrograde Golgi-to-ER transport of dilysine-tagged proteins. This is Coatomer subunit alpha-3 from Oryza sativa subsp. japonica (Rice).